Reading from the N-terminus, the 643-residue chain is RNA-binding protein MEX3D (643 aa).

2 disordered regions span residues Met-1–Ala-48 and Gly-61–Asp-92. Positions Thr-18–Asp-34 are enriched in low complexity. Positions Cys-83–Asp-92 are enriched in acidic residues. 2 KH domains span residues Met-160–Ile-221 and Gln-253–Ile-314. 3 disordered regions span residues Pro-357–Thr-427, Gly-471–Ser-505, and Val-519–Pro-583. Gly residues predominate over residues Gly-405–Gly-418. The residue at position 491 (Thr-491) is a Phosphothreonine. At Ser-495 the chain carries Phosphoserine. Composition is skewed to low complexity over residues Ser-495 to Ser-505, Leu-531 to Leu-556, and Pro-567 to Pro-583. The RING-type zinc-finger motif lies at Cys-592–Arg-632.

It is found in the cytoplasm. The protein localises to the nucleus. RNA binding protein, may be involved in post-transcriptional regulatory mechanisms. This chain is RNA-binding protein MEX3D (Mex3d), found in Mus musculus (Mouse).